The following is a 260-amino-acid chain: Imidazole glycerol phosphate synthase subunit HisF (260 aa).

Active-site residues include Asp-11 and Asp-130.

This sequence belongs to the HisA/HisF family. As to quaternary structure, heterodimer of HisH and HisF.

Its subcellular location is the cytoplasm. It catalyses the reaction 5-[(5-phospho-1-deoxy-D-ribulos-1-ylimino)methylamino]-1-(5-phospho-beta-D-ribosyl)imidazole-4-carboxamide + L-glutamine = D-erythro-1-(imidazol-4-yl)glycerol 3-phosphate + 5-amino-1-(5-phospho-beta-D-ribosyl)imidazole-4-carboxamide + L-glutamate + H(+). The protein operates within amino-acid biosynthesis; L-histidine biosynthesis; L-histidine from 5-phospho-alpha-D-ribose 1-diphosphate: step 5/9. IGPS catalyzes the conversion of PRFAR and glutamine to IGP, AICAR and glutamate. The HisF subunit catalyzes the cyclization activity that produces IGP and AICAR from PRFAR using the ammonia provided by the HisH subunit. This chain is Imidazole glycerol phosphate synthase subunit HisF, found in Endomicrobium trichonymphae.